The chain runs to 485 residues: Sulfated surface glycoprotein 185 (485 aa).

An N-terminal signal peptide occupies residues 1–20 (MSKLLLVALFGAIAVVATSA). N193 is a glycosylation site (N-linked (GlcNAc...) asparagine). The disordered stretch occupies residues 212 to 317 (LSGPNVNPIG…PPVPPPPSPP (106 aa)). Pro residues-rich tracts occupy residues 221–234 (GPAP…PSPQ) and 241–317 (PPSP…PSPP). Residue N347 is glycosylated (N-linked (GlcNAc...) asparagine).

Polymer. Intersubunit cross-links are formed between saccharide chains rather than between polypeptide chains. In terms of processing, hydroxylated on proline residues in the Pro-rich central domain. Post-translationally, glycosylated; contains sulfate-substituted glycans.

Its function is as follows. The extracellular matrix (ECM) of Volvox contains insoluble fibrous layers that surround individual cells at a distance to form contiguous cellular compartments. SSG 185 is the monomeric precursor of this substructure (C3Z structure). The chain is Sulfated surface glycoprotein 185 from Volvox carteri (Green alga).